A 199-amino-acid chain; its full sequence is Cytosine-containing mismatch-binding protein 1 (199 aa).

A DNA-binding region (HMG box) is located at residues 123 to 197 (PKKPSSAFIL…QYDKFMKEAG (75 aa)).

In terms of assembly, monomer.

The protein localises to the nucleus. Functionally, binds to cytosines in base mismatches and opposite chemically altered guanines. May be involved in repair of DNA damage. The sequence is that of Cytosine-containing mismatch-binding protein 1 from Schizosaccharomyces pombe (strain 972 / ATCC 24843) (Fission yeast).